The sequence spans 600 residues: Elongation factor 4 (600 aa).

The region spanning D13–R194 is the tr-type G domain. GTP-binding positions include D25–T30 and N141–D144.

It belongs to the TRAFAC class translation factor GTPase superfamily. Classic translation factor GTPase family. LepA subfamily.

It localises to the cell membrane. The catalysed reaction is GTP + H2O = GDP + phosphate + H(+). Its function is as follows. Required for accurate and efficient protein synthesis under certain stress conditions. May act as a fidelity factor of the translation reaction, by catalyzing a one-codon backward translocation of tRNAs on improperly translocated ribosomes. Back-translocation proceeds from a post-translocation (POST) complex to a pre-translocation (PRE) complex, thus giving elongation factor G a second chance to translocate the tRNAs correctly. Binds to ribosomes in a GTP-dependent manner. This is Elongation factor 4 from Rubrobacter xylanophilus (strain DSM 9941 / JCM 11954 / NBRC 16129 / PRD-1).